A 394-amino-acid polypeptide reads, in one-letter code: Dual specificity protein phosphatase 4 (394 aa).

At V2 the chain carries N-acetylvaline. The region spanning 41-159 (SGGKCLLLDC…FSSEYPEFCS (119 aa)) is the Rhodanese domain. The Tyrosine-protein phosphatase domain maps to 195–336 (GPVEILPFLY…LLQFESQVLA (142 aa)). The Phosphocysteine intermediate role is filled by C280. Phosphoserine; by MAPK is present on residues S386 and S391.

Belongs to the protein-tyrosine phosphatase family. Non-receptor class dual specificity subfamily. Hollow spherical complex composed of 24 subunits with pseudooctahedral symmetry, has a tetramer as the basic unit. Phosphorylation in the C-terminus by ERK1/2 inhibits proteasomal degradation and stabilizes the protein.

It localises to the nucleus. The catalysed reaction is O-phospho-L-tyrosyl-[protein] + H2O = L-tyrosyl-[protein] + phosphate. It carries out the reaction O-phospho-L-seryl-[protein] + H2O = L-seryl-[protein] + phosphate. The enzyme catalyses O-phospho-L-threonyl-[protein] + H2O = L-threonyl-[protein] + phosphate. Functionally, regulates mitogenic signal transduction by dephosphorylating both Thr and Tyr residues on MAP kinases ERK1 and ERK2. This Homo sapiens (Human) protein is Dual specificity protein phosphatase 4 (DUSP4).